Reading from the N-terminus, the 145-residue chain is MIRKTKKIRKQRGSRSVGGGCTKKRRGAGHRGGRGQAGGNKHHWTWMVINDPKHFGKYGFKRPQKTIQQFKPINLSVIDNNIEKLLADEIAVKEDGQIVLDVTQLGYNKVLGKGSLSTAITIKAPKFSQSAISKIEDAGGIAEII.

Basic residues-rich tracts occupy residues 1-13 and 22-33; these read MIRKTKKIRKQRG and TKKRRGAGHRGG. The segment at 1 to 41 is disordered; that stretch reads MIRKTKKIRKQRGSRSVGGGCTKKRRGAGHRGGRGQAGGNK.

This sequence belongs to the universal ribosomal protein uL15 family. Part of the 50S ribosomal subunit.

Functionally, binds to the 23S rRNA. The chain is Large ribosomal subunit protein uL15 from Methanosphaera stadtmanae (strain ATCC 43021 / DSM 3091 / JCM 11832 / MCB-3).